Consider the following 137-residue polypeptide: Putative pre-16S rRNA nuclease (137 aa).

Belongs to the YqgF nuclease family.

It localises to the cytoplasm. Could be a nuclease involved in processing of the 5'-end of pre-16S rRNA. The chain is Putative pre-16S rRNA nuclease from Anaeromyxobacter dehalogenans (strain 2CP-1 / ATCC BAA-258).